The following is a 447-amino-acid chain: Elongation factor 1-alpha (447 aa).

Residues 5–230 (KIHISIVVIG…DQINEPKRPS (226 aa)) form the tr-type G domain. Residues 14-21 (GHVDSGKS) form a G1 region. Residue 14 to 21 (GHVDSGKS) coordinates GTP. N6,N6-dimethyllysine is present on K55. A G2 region spans residues 70-74 (GITID). K79 is modified (N6,N6,N6-trimethyllysine). The interval 91–94 (DAPG) is G3. GTP-binding positions include 91-95 (DAPGH) and 153-156 (NKMD). Residues 153–156 (NKMD) are G4. Residue K187 is modified to N6,N6,N6-trimethyllysine. The tract at residues 194 to 196 (SGF) is G5. At K261 the chain carries N6-methyllysine. E289 carries the post-translational modification 5-glutamyl glycerylphosphorylethanolamine. K306 is subject to N6,N6,N6-trimethyllysine. E362 is modified (5-glutamyl glycerylphosphorylethanolamine). K396 carries the post-translational modification N6,N6,N6-trimethyllysine.

The protein belongs to the TRAFAC class translation factor GTPase superfamily. Classic translation factor GTPase family. EF-Tu/EF-1A subfamily.

It is found in the cytoplasm. Its function is as follows. This protein promotes the GTP-dependent binding of aminoacyl-tRNA to the A-site of ribosomes during protein biosynthesis. This chain is Elongation factor 1-alpha, found in Hordeum vulgare (Barley).